The chain runs to 386 residues: Ethanolamine kinase 2 (386 aa).

It belongs to the choline/ethanolamine kinase family. Expressed in kidney, liver, ovary, testis and prostate.

The catalysed reaction is ethanolamine + ATP = phosphoethanolamine + ADP + H(+). The protein operates within phospholipid metabolism; phosphatidylethanolamine biosynthesis; phosphatidylethanolamine from ethanolamine: step 1/3. Its function is as follows. Highly specific for ethanolamine phosphorylation. Does not have choline kinase activity. The protein is Ethanolamine kinase 2 (ETNK2) of Homo sapiens (Human).